The sequence spans 126 residues: Large ribosomal subunit protein bL12 (126 aa).

This sequence belongs to the bacterial ribosomal protein bL12 family. Homodimer. Part of the ribosomal stalk of the 50S ribosomal subunit. Forms a multimeric L10(L12)X complex, where L10 forms an elongated spine to which 2 to 4 L12 dimers bind in a sequential fashion. Binds GTP-bound translation factors.

Forms part of the ribosomal stalk which helps the ribosome interact with GTP-bound translation factors. Is thus essential for accurate translation. This chain is Large ribosomal subunit protein bL12, found in Methylobacterium sp. (strain 4-46).